Here is a 372-residue protein sequence, read N- to C-terminus: Cytochrome b (372 aa).

The next 4 helical transmembrane spans lie at 25–45, 69–90, 105–125, and 170–190; these read FGSMLLTCLIMQILTGFFLAI, WIMQNLHAIGASMFFICIYIHI, WLSGTTLLITLMATAFFGYVL, and FFALHFILPFAIISLSSIHII. Heme b is bound by residues His75 and His89. The heme b site is built by His174 and His188. Residue His193 coordinates a ubiquinone. A run of 4 helical transmembrane segments spans residues 218–238, 280–300, 312–332, and 339–358; these read YKDMLMITIMVTLLFIILSFL, LGGTMALTMSIMILMTTPFTH, LSQTMFWTLIVTFIMITWTAT, and FITISQTTTVFYFSFFIMTP.

It belongs to the cytochrome b family. In terms of assembly, the cytochrome bc1 complex contains 3 respiratory subunits (MT-CYB, CYC1 and UQCRFS1), 2 core proteins (UQCRC1 and UQCRC2) and probably 6 low-molecular weight proteins. Requires heme b as cofactor.

The protein resides in the mitochondrion inner membrane. In terms of biological role, component of the ubiquinol-cytochrome c reductase complex (complex III or cytochrome b-c1 complex) that is part of the mitochondrial respiratory chain. The b-c1 complex mediates electron transfer from ubiquinol to cytochrome c. Contributes to the generation of a proton gradient across the mitochondrial membrane that is then used for ATP synthesis. The chain is Cytochrome b (MT-CYB) from Aspidelaps scutatus (Shield-nose snake).